The chain runs to 323 residues: DNA-directed RNA polymerase subunit alpha (323 aa).

The segment at 1 to 225 is alpha N-terminal domain (alpha-NTD); it reads MLDIAMPKIE…QYSQTIADFN (225 aa). An alpha C-terminal domain (alpha-CTD) region spans residues 246-323; it reads IYDTPIEELD…SHAARAEIEG (78 aa).

Belongs to the RNA polymerase alpha chain family. As to quaternary structure, homodimer. The RNAP catalytic core consists of 2 alpha, 1 beta, 1 beta' and 1 omega subunit. When a sigma factor is associated with the core the holoenzyme is formed, which can initiate transcription.

It carries out the reaction RNA(n) + a ribonucleoside 5'-triphosphate = RNA(n+1) + diphosphate. DNA-dependent RNA polymerase catalyzes the transcription of DNA into RNA using the four ribonucleoside triphosphates as substrates. In Roseiflexus sp. (strain RS-1), this protein is DNA-directed RNA polymerase subunit alpha.